The sequence spans 657 residues: Glycogen debranching enzyme (657 aa).

Catalysis depends on Asp-336, which acts as the Nucleophile. Catalysis depends on Glu-371, which acts as the Proton donor. Positions 460-479 (ANGEENRDGTNNNHSFNHGI) are disordered.

The protein belongs to the glycosyl hydrolase 13 family.

It carries out the reaction Hydrolysis of (1-&gt;6)-alpha-D-glucosidic linkages to branches with degrees of polymerization of three or four glucose residues in limit dextrin.. Its pathway is glycan degradation; glycogen degradation. In terms of biological role, removes maltotriose and maltotetraose chains that are attached by 1,6-alpha-linkage to the limit dextrin main chain, generating a debranched limit dextrin. This chain is Glycogen debranching enzyme, found in Enterobacter sp. (strain 638).